Reading from the N-terminus, the 229-residue chain is Ribonuclease 3 (229 aa).

The 123-residue stretch at 5–127 (LSRLERKLGH…LIGAIYLDAG (123 aa)) folds into the RNase III domain. Position 40 (E40) interacts with Mg(2+). Residue D44 is part of the active site. D113 and E116 together coordinate Mg(2+). Residue E116 is part of the active site. The DRBM domain occupies 154-224 (DPKTRLQEFL…AAAALIALGV (71 aa)).

The protein belongs to the ribonuclease III family. In terms of assembly, homodimer. Mg(2+) is required as a cofactor.

It is found in the cytoplasm. The catalysed reaction is Endonucleolytic cleavage to 5'-phosphomonoester.. In terms of biological role, digests double-stranded RNA. Involved in the processing of primary rRNA transcript to yield the immediate precursors to the large and small rRNAs (23S and 16S). Processes some mRNAs, and tRNAs when they are encoded in the rRNA operon. Processes pre-crRNA and tracrRNA of type II CRISPR loci if present in the organism. This chain is Ribonuclease 3, found in Ectopseudomonas mendocina (strain ymp) (Pseudomonas mendocina).